Here is a 259-residue protein sequence, read N- to C-terminus: tRNA pseudouridine synthase A (259 aa).

Aspartate 51 acts as the Nucleophile in catalysis. Tyrosine 109 serves as a coordination point for substrate.

It belongs to the tRNA pseudouridine synthase TruA family. Homodimer.

The catalysed reaction is uridine(38/39/40) in tRNA = pseudouridine(38/39/40) in tRNA. Formation of pseudouridine at positions 38, 39 and 40 in the anticodon stem and loop of transfer RNAs. In Colwellia psychrerythraea (strain 34H / ATCC BAA-681) (Vibrio psychroerythus), this protein is tRNA pseudouridine synthase A.